Reading from the N-terminus, the 165-residue chain is Lipoprotein signal peptidase (165 aa).

Helical transmembrane passes span 7–27, 46–66, 72–92, and 100–120; these read YFSSSSSMLPWLGIAAVLVLL, AVTSFFNLVLVYNKGAAFSFL, WQRYFFTIMGIGAAIFIIYLL, and LFCWALALILGGAIGNVIDRV. Active-site residues include Asp-127 and Asp-145. A helical transmembrane segment spans residues 136–156; sequence WHWPAFNIADSAICIGAVLFI.

It belongs to the peptidase A8 family.

Its subcellular location is the cell inner membrane. The catalysed reaction is Release of signal peptides from bacterial membrane prolipoproteins. Hydrolyzes -Xaa-Yaa-Zaa-|-(S,diacylglyceryl)Cys-, in which Xaa is hydrophobic (preferably Leu), and Yaa (Ala or Ser) and Zaa (Gly or Ala) have small, neutral side chains.. It participates in protein modification; lipoprotein biosynthesis (signal peptide cleavage). Its function is as follows. This protein specifically catalyzes the removal of signal peptides from prolipoproteins. In Janthinobacterium sp. (strain Marseille) (Minibacterium massiliensis), this protein is Lipoprotein signal peptidase.